A 179-amino-acid chain; its full sequence is Apoptosis regulator Bcl-2 homolog (179 aa).

A BH1 motif is present at residues 76–95; that stretch reads ELFKDLINWGRICGFIVFSA. Residues 126–141 carry the BH2 motif; it reads PWMISHGGQEEFLAFS.

The protein belongs to the Bcl-2 family. As to quaternary structure, interacts with host BECN1 (via BH3 homology domain); this interaction allows the virus to inhibit BECN1, and thus autophagy. Interacts with host BID. Interacts with host BAX.

The protein localises to the host mitochondrion. The protein resides in the host endoplasmic reticulum. Suppresses apoptosis in host cell to promote the viral replication. Has the ability to potentially bind to all the members of the proapoptotic Bcl-2 family. Inhibits autophagy by interacting with host Beclin 1 (BECN1). The sequence is that of Apoptosis regulator Bcl-2 homolog from African swine fever virus (isolate Pig/Kenya/KEN-50/1950) (ASFV).